The primary structure comprises 650 residues: MSSVLMSKTVTPFLREHIPSIYAPIGKPGNQETARAENPNSKYCYRHHPDSKCRRAADKAKMVMIQSELDKLTSADQQAVTHVWSLFSAAPARHRDLMLQGILSQLCFPQLSFVSREVNEALKIDFISALPVELAQKVLCYLDTVSLTKAAQVSQRWRTLADSDAVWVRMCEQHVNRKCTKCGWGLPLLERKKLRNYTRQRQLAKGGPQGRVTELADSHDSQDRSVNQHGKRPAAEAEEEDPIKKRQCMAAAEASKAVTQPKTRSWKAVYRDRWQVSYNWKNSRYKLSVLKGHENGVTCLQLDDNILATGSYDTTIKIWNIETEECIRTLVGHTAGIRALQFDDSKLISGSLDHTIKVWNWHTGECLSTFAAHTDSVISVHFDGHLLASGSSDKTVKIFDFNSKETYCLKGHSDWVNSTHVDIKSRTVFSASDDTTIKLWDLDTRQVIRTYEGHVGHVQQVLILPPEYEPDEEVLNGASQDNQDAMSVSSGGSGSPSMSHAQIERAGSPGSHSSSHNLLPSSLPSGDEDVRHLYGSAFVADESRPLPPRYFMTGGLDSTMRLWDSATGRCLRTLFGHLEGVWSLAGDTIRVISGANDGMVKTWEPRSGKCDATYTGHCGPVTCVGLSDSLMASGSEDGTIRLHSFKPCRQ.

An F-box domain is found at 124–170 (IDFISALPVELAQKVLCYLDTVSLTKAAQVSQRWRTLADSDAVWVRM). The interval 200–244 (QRQLAKGGPQGRVTELADSHDSQDRSVNQHGKRPAAEAEEEDPIK) is disordered. Basic and acidic residues predominate over residues 214–223 (ELADSHDSQD). WD repeat units follow at residues 292-320 (GHEN…KIWN), 332-360 (GHTA…KVWN), 372-400 (AHTD…KIFD), 411-441 (GHSD…KLWD), and 453-488 (GHVG…AMSV). The tract at residues 482-525 (NQDAMSVSSGGSGSPSMSHAQIERAGSPGSHSSSHNLLPSSLPS) is disordered. 2 stretches are compositionally biased toward low complexity: residues 487–499 (SVSS…PSMS) and 507–525 (GSPG…SLPS). WD repeat units lie at residues 528 to 564 (EDVR…RLWD), 576 to 604 (GHLE…KTWE), and 616 to 644 (GHCG…RLHS).

Belongs to the WD repeat MET30/SCONB/SCON-2 family. As to quaternary structure, component of the SCF(scon-2) E3 ubiquitin ligase complex.

Its pathway is protein modification; protein ubiquitination. Its function is as follows. Component of the SCF(scon-2) E3 ubiquitin ligase complex involved in the regulation of sulfur metabolite repression, probably by mediating the inactivation or degradation of the metR transcription factor. The chain is Probable E3 ubiquitin ligase complex SCF subunit scon-2 (scon-2) from Neurospora crassa (strain ATCC 24698 / 74-OR23-1A / CBS 708.71 / DSM 1257 / FGSC 987).